The sequence spans 427 residues: MHLIDYLLLLLVGLLALSHGQLHVEHDGESCSNSSHQQILETGEGSPSLKIAPANADFAFRFYYLIASETPGKNIFFSPLSISAAYAMLSLGACSHSRSQILEGLGFNLTELSESDVHRGFQHLLHTLNLPGHGLETRVGSALFLSHNLKFLAKFLNDTMTFYEAKLFHTNFYDTVGTIQLINDHVKKETRGKIVDLVSELKKDVLMVLVNYIYFKALWEKPFISSRTTPKDFYVDENTTVRVPMMLQDQEHHWYLHDRYLPCSVLRMDYKGDTTVFFILPNQGKMGEIEEVLTPEMLMRWNNLLQKRNFYKKLELHFPKFSISGSYVLDQILPRLGFTDLFSKRADLSGITKQQKLEASKSFHKATLDVDEAGTEAAAATSFAIKFFSAQTNRHILRFNRPFLVVIFSTSTQSVLFLGKVVDPTKQ.

The first 20 residues, 1 to 20, serve as a signal peptide directing secretion; the sequence is MHLIDYLLLLLVGLLALSHG. N-linked (GlcNAc...) asparagine glycans are attached at residues asparagine 33, asparagine 108, asparagine 157, and asparagine 238.

This sequence belongs to the serpin family. Monomer and some homodimers.

The protein localises to the secreted. In terms of biological role, inhibits human amidolytic and kininogenase activities of tissue kallikrein. This Pongo abelii (Sumatran orangutan) protein is Kallistatin (SERPINA4).